We begin with the raw amino-acid sequence, 21 residues long: Outer membrane protein A (21 aa).

A beta stranded membrane pass occupies residues 6 to 16 (TWYTGAKLGWS).

It belongs to the outer membrane OOP (TC 1.B.6) superfamily. OmpA family. In terms of assembly, monomer and homodimer.

The protein resides in the cell outer membrane. In terms of biological role, with TolR probably plays a role in maintaining the position of the peptidoglycan cell wall in the periplasm. Acts as a porin with low permeability that allows slow penetration of small solutes; an internal gate slows down solute passage. This is Outer membrane protein A from Actinobacillus lignieresii.